Reading from the N-terminus, the 332-residue chain is Peroxidase C1C (332 aa).

Residues 1–9 (MLHASFSNA) form the signal peptide. At Gln10 the chain carries Pyrrolidone carboxylic acid. 4 disulfides stabilise this stretch: Cys20–Cys100, Cys53–Cys58, Cys106–Cys310, and Cys186–Cys218. An N-linked (GlcNAc...) asparagine glycan is attached at Asn22. His51 acts as the Proton acceptor in catalysis. The Ca(2+) site is built by Asp52, Val55, Gly57, Asp59, and Ser61. N-linked (GlcNAc...) asparagine glycosylation is present at Asn66. Position 148 (Pro148) interacts with substrate. Residue His179 participates in heme b binding. Thr180 provides a ligand contact to Ca(2+). N-linked (GlcNAc...) asparagine glycosylation is found at Asn195, Asn207, and Asn223. Residues Asp231, Thr234, and Asp239 each coordinate Ca(2+). An N-linked (GlcNAc...) asparagine glycan is attached at Asn264.

It belongs to the peroxidase family. Classical plant (class III) peroxidase subfamily. It depends on Ca(2+) as a cofactor. Heme b serves as cofactor.

It is found in the secreted. Its subcellular location is the vacuole. The enzyme catalyses 2 a phenolic donor + H2O2 = 2 a phenolic radical donor + 2 H2O. Functionally, removal of H(2)O(2), oxidation of toxic reductants, biosynthesis and degradation of lignin, suberization, auxin catabolism, response to environmental stresses such as wounding, pathogen attack and oxidative stress. These functions might be dependent on each isozyme/isoform in each plant tissue. This is Peroxidase C1C (PRXC1C) from Armoracia rusticana (Horseradish).